A 395-amino-acid polypeptide reads, in one-letter code: Protein RIF2 (395 aa).

As to quaternary structure, interacts with RIF1 and RAP1 C-terminus.

The protein resides in the nucleus. Its subcellular location is the chromosome. The protein localises to the telomere. Functionally, involved in transcriptional silencing and telomere length regulation. Its role in telomere length regulation results from either a block in elongation or promoting degradation of the telomere ends. Loss of RIF1 function results in derepression of an HMR silencer, whose ARS consensus element has been deleted, and in the elongation of telomeres. RAP1 may target the binding of RIF1 to silencers and telomeres. This chain is Protein RIF2 (RIF2), found in Saccharomyces cerevisiae (strain ATCC 204508 / S288c) (Baker's yeast).